Reading from the N-terminus, the 64-residue chain is Large ribosomal subunit protein bL35 (64 aa).

Belongs to the bacterial ribosomal protein bL35 family.

This is Large ribosomal subunit protein bL35 from Colwellia psychrerythraea (strain 34H / ATCC BAA-681) (Vibrio psychroerythus).